Consider the following 225-residue polypeptide: Thymidine kinase (225 aa).

15-22 (GSMFSGKT) lines the ATP pocket. The interval 85 to 110 (KKQNHRTTTQCRSGDGTNNPGGVIPS) is disordered. The segment covering 90-104 (RTTTQCRSGDGTNNP) has biased composition (polar residues). 121 to 124 (DEAN) contacts ATP. E122 functions as the Proton acceptor in the catalytic mechanism. Residues C178, C181, C216, and C219 each coordinate Zn(2+).

The protein belongs to the thymidine kinase family. In terms of assembly, homotetramer.

Its subcellular location is the cytoplasm. The enzyme catalyses thymidine + ATP = dTMP + ADP + H(+). The polypeptide is Thymidine kinase (Haloquadratum walsbyi (strain DSM 16790 / HBSQ001)).